Reading from the N-terminus, the 118-residue chain is Basic phospholipase A2 CM-III (118 aa).

Intrachain disulfides connect cysteine 11-cysteine 70, cysteine 26-cysteine 117, cysteine 28-cysteine 44, cysteine 43-cysteine 98, cysteine 50-cysteine 91, cysteine 59-cysteine 84, and cysteine 77-cysteine 89. The Ca(2+) site is built by tyrosine 27, glycine 29, and glycine 31. The active site involves histidine 47. Aspartate 48 provides a ligand contact to Ca(2+). The Coagulation factor Xa binding motif signature appears at 52-69 (EKAGKMGCWPYFTLYKYK). Residue aspartate 92 is part of the active site.

It belongs to the phospholipase A2 family. Group I subfamily. D49 sub-subfamily. It depends on Ca(2+) as a cofactor. As to expression, expressed by the venom gland.

The protein resides in the secreted. It carries out the reaction a 1,2-diacyl-sn-glycero-3-phosphocholine + H2O = a 1-acyl-sn-glycero-3-phosphocholine + a fatty acid + H(+). In terms of biological role, snake venom phospholipase A2 (PLA2) that shows several activities. It shows strong anticoagulant activity, probably by binding to coagulation factor Xa (F10) and inhibiting the formation of the prothrombinase complex, shows direct hemolytic action, causes neuromuscular blockade with a gradual contracture and a decreased sensitivity to ACh and KCl, abolishes twitches evoked by indirect stimulation earlier than those by direct stimulation (in the mouse phrenic nerve-diaphragm preparation), and causes myonecrosis when injected intramuscularly. PLA2 catalyzes the calcium-dependent hydrolysis of the 2-acyl groups in 3-sn-phosphoglycerides. This is Basic phospholipase A2 CM-III from Naja mossambica (Mozambique spitting cobra).